We begin with the raw amino-acid sequence, 506 residues long: Probable Xaa-Pro aminopeptidase PADG_06815 (506 aa).

Positions 285, 296, 433, and 471 each coordinate Mn(2+).

Belongs to the peptidase M24B family. Requires Mn(2+) as cofactor.

The catalysed reaction is Release of any N-terminal amino acid, including proline, that is linked to proline, even from a dipeptide or tripeptide.. Its function is as follows. Catalyzes the removal of a penultimate prolyl residue from the N-termini of peptides. The sequence is that of Probable Xaa-Pro aminopeptidase PADG_06815 from Paracoccidioides brasiliensis (strain Pb18).